Consider the following 234-residue polypeptide: Ribosomal RNA small subunit methyltransferase G (234 aa).

S-adenosyl-L-methionine contacts are provided by residues G74, F79, 125–126 (AE), and R144.

Belongs to the methyltransferase superfamily. RNA methyltransferase RsmG family.

It localises to the cytoplasm. Its function is as follows. Specifically methylates the N7 position of a guanine in 16S rRNA. The polypeptide is Ribosomal RNA small subunit methyltransferase G (Roseiflexus sp. (strain RS-1)).